The following is a 166-amino-acid chain: NAD(P)H-quinone oxidoreductase subunit I, chloroplastic (166 aa).

2 consecutive 4Fe-4S ferredoxin-type domains span residues 55 to 84 and 95 to 124; these read GRIH…VDWK and LNYS…MTEE. The [4Fe-4S] cluster site is built by Cys-64, Cys-67, Cys-70, Cys-74, Cys-104, Cys-107, Cys-110, and Cys-114.

Belongs to the complex I 23 kDa subunit family. In terms of assembly, NDH is composed of at least 16 different subunits, 5 of which are encoded in the nucleus. It depends on [4Fe-4S] cluster as a cofactor.

Its subcellular location is the plastid. It localises to the chloroplast thylakoid membrane. It carries out the reaction a plastoquinone + NADH + (n+1) H(+)(in) = a plastoquinol + NAD(+) + n H(+)(out). The catalysed reaction is a plastoquinone + NADPH + (n+1) H(+)(in) = a plastoquinol + NADP(+) + n H(+)(out). Its function is as follows. NDH shuttles electrons from NAD(P)H:plastoquinone, via FMN and iron-sulfur (Fe-S) centers, to quinones in the photosynthetic chain and possibly in a chloroplast respiratory chain. The immediate electron acceptor for the enzyme in this species is believed to be plastoquinone. Couples the redox reaction to proton translocation, and thus conserves the redox energy in a proton gradient. The polypeptide is NAD(P)H-quinone oxidoreductase subunit I, chloroplastic (Aphanactis jamesoniana).